Reading from the N-terminus, the 156-residue chain is ATP synthase subunit b (156 aa).

A helical transmembrane segment spans residues 5–27 (ITLIGQMITFAIFIGFTMKFVWP).

The protein belongs to the ATPase B chain family. As to quaternary structure, F-type ATPases have 2 components, F(1) - the catalytic core - and F(0) - the membrane proton channel. F(1) has five subunits: alpha(3), beta(3), gamma(1), delta(1), epsilon(1). F(0) has three main subunits: a(1), b(2) and c(10-14). The alpha and beta chains form an alternating ring which encloses part of the gamma chain. F(1) is attached to F(0) by a central stalk formed by the gamma and epsilon chains, while a peripheral stalk is formed by the delta and b chains.

It is found in the cell inner membrane. In terms of biological role, f(1)F(0) ATP synthase produces ATP from ADP in the presence of a proton or sodium gradient. F-type ATPases consist of two structural domains, F(1) containing the extramembraneous catalytic core and F(0) containing the membrane proton channel, linked together by a central stalk and a peripheral stalk. During catalysis, ATP synthesis in the catalytic domain of F(1) is coupled via a rotary mechanism of the central stalk subunits to proton translocation. Functionally, component of the F(0) channel, it forms part of the peripheral stalk, linking F(1) to F(0). The polypeptide is ATP synthase subunit b (Francisella tularensis subsp. holarctica (strain OSU18)).